We begin with the raw amino-acid sequence, 910 residues long: Eukaryotic translation initiation factor 3 subunit C (910 aa).

Positions 1–21 (MSRFFANGSESESESSEEEIQ) are disordered. Acidic residues predominate over residues 11 to 20 (SESESSEEEI). Phosphoserine is present on residues Ser-34, Ser-165, Ser-176, and Ser-185. A disordered region spans residues 157 to 279 (FREAPDQESE…IRKRAEDDED (123 aa)). A compositionally biased stretch (acidic residues) spans 162-186 (DQESEAEDEVVALESDGGDAGDDSD). Residues 194 to 207 (AVPKAVKSAPAKAA) show a composition bias toward low complexity. Residues 209 to 235 (ADDDDSDDSIDWDSDSESETESSDDEN) show a composition bias toward acidic residues. Residues 240–268 (MRERFLKRTTEKEEKDDDKRKDKRKEQKT) show a composition bias toward basic and acidic residues. One can recognise a PCI domain in the interval 639–815 (FHMHINLELL…ETVGMHRSEP (177 aa)). The tract at residues 847–910 (FFQRGNMGNR…QQQVQTIDEE (64 aa)) is disordered. Positions 862–874 (NRNQNNQGGNWLG) are enriched in low complexity. A compositionally biased stretch (basic residues) spans 882–891 (RNRNQRGHHK). Low complexity predominate over residues 895–910 (DRQQQQQQQVQTIDEE).

It belongs to the eIF-3 subunit C family. Component of the eukaryotic translation initiation factor 3 (eIF-3) complex. The eIF-3 complex interacts with pix.

It localises to the cytoplasm. In terms of biological role, component of the eukaryotic translation initiation factor 3 (eIF-3) complex, which is involved in protein synthesis of a specialized repertoire of mRNAs and, together with other initiation factors, stimulates binding of mRNA and methionyl-tRNAi to the 40S ribosome. The eIF-3 complex specifically targets and initiates translation of a subset of mRNAs involved in cell proliferation. The protein is Eukaryotic translation initiation factor 3 subunit C of Drosophila melanogaster (Fruit fly).